Here is a 2656-residue protein sequence, read N- to C-terminus: 1-phosphatidylinositol 3-phosphate 5-kinase (2656 aa).

The interval 24 to 159 (FGTDDSQKDF…NSTNNDTSSN (136 aa)) is disordered. Low complexity-rich tracts occupy residues 59 to 107 (NNNN…NNNN) and 124 to 159 (SNTT…TSSN). The FYVE-type zinc-finger motif lies at 198–255 (DHSSAVCYECSEEFTTFKRRHHCRLCGQIFCWKCSQKTLTDGKGERVRVCNFCYRRYM). Zn(2+)-binding residues include Cys204, Cys207, Cys220, Cys223, Cys228, Cys231, Cys247, and Cys250. The span at 304-331 (NVSLGNSGDNSSFVQSPNNNFSQSPTFS) shows a compositional bias: polar residues. Disordered regions lie at residues 304–383 (NVSL…NNQQ), 465–495 (DHHQ…SPIV), 517–570 (DNLD…SSSS), 618–657 (NNND…NTSF), 670–823 (TIGR…QQQP), 1115–1150 (SNSI…NNST), 1633–1659 (RSKR…QILI), 1710–1844 (VNNN…SSTP), 2031–2127 (QQQQ…SISP), 2179–2208 (NQQQ…SIIE), 2246–2304 (QQGD…SSNS), and 2617–2656 (NNNN…QINK). Low complexity predominate over residues 332–355 (QQQQQQQQQQQQQQQQQQQQQQQQ). 3 stretches are compositionally biased toward polar residues: residues 356 to 371 (TTGV…NSTL), 473 to 489 (SNSH…TPSG), and 542 to 557 (SHSS…TVST). Composition is skewed to low complexity over residues 558–570 (GESN…SSSS), 618–637 (NNND…NNNN), 674–730 (NNNN…NLPN), 743–757 (QQQQ…QPQP), and 811–823 (PSSS…QQQP). Low complexity-rich tracts occupy residues 1639-1656 (QQQQ…PQPQ) and 1710-1746 (VNNN…NNNN). Coiled-coil stretches lie at residues 1741–1823 (NNNN…NNNN) and 2019–2061 (KRIS…QQEQ). Basic and acidic residues predominate over residues 1750-1798 (NKSENENENKNENKNENENENENKNENKNENENENKKENENQLEIKNEN). Composition is skewed to low complexity over residues 1807-1833 (NNNN…IDNN), 2031-2061 (QQQQ…QQEQ), 2078-2107 (SPSS…SETN), and 2118-2127 (LSGSPISISP). A compositionally biased stretch (basic and acidic residues) spans 2193–2202 (IDEKDDRNTE). Low complexity-rich tracts occupy residues 2252–2283 (NNNN…NNNN) and 2618–2647 (NNNN…GNIN). Residues 2275–2596 (NNNNTNNNNE…RFRDAMWLYF (322 aa)) form the PIPK domain.

It is found in the endosome membrane. The protein resides in the early endosome membrane. Its subcellular location is the cytoplasmic vesicle. It localises to the phagosome membrane. The protein localises to the late endosome membrane. It catalyses the reaction a 1,2-diacyl-sn-glycero-3-phospho-(1D-myo-inositol-3-phosphate) + ATP = a 1,2-diacyl-sn-glycero-3-phospho-(1D-myo-inositol-3,5-bisphosphate) + ADP + H(+). The enzyme catalyses a 1,2-diacyl-sn-glycero-3-phospho-(1D-myo-inositol) + ATP = a 1,2-diacyl-sn-glycero-3-phospho-(1D-myo-inositol-5-phosphate) + ADP + H(+). The catalysed reaction is L-seryl-[protein] + ATP = O-phospho-L-seryl-[protein] + ADP + H(+). Dual specificity kinase part of the PI(3,5)P2 regulatory complex which regulates both the synthesis and turnover of phosphatidylinositol 3,5-bisphosphate (PtdIns(3,5)P2). Catalyzes the phosphorylation of phosphatidylinositol 3-phosphate on the fifth hydroxyl of the myo-inositol ring, to form phosphatidylinositol 3,5-bisphosphate. The protein is 1-phosphatidylinositol 3-phosphate 5-kinase (pip5k3) of Dictyostelium discoideum (Social amoeba).